Here is a 406-residue protein sequence, read N- to C-terminus: Oligouridylate-binding protein 1 (406 aa).

2 RRM domains span residues R49 to A123 and Y134 to K212. Positions T231–N250 are disordered. In terms of domain architecture, RRM 3 spans T255–K329.

The protein resides in the nucleus. Functionally, heterogeneous nuclear ribonucleoprotein (hnRNP)-like protein that acts as a component of the pre-mRNA processing machinery. Functions to facilitate the nuclear maturation of plant pre-mRNAs. Binds with high affinity to RNA molecules that contain AU-rich regions. May bind to the 3'-UTR and protects the mRNA against exonucleolytic degradation. Associates with nuclear poly(A)+ RNA in nucleus in vivo. Does not stimulate transcription or the 3' end cleavage/polyadenylation reaction. In Nicotiana plumbaginifolia (Leadwort-leaved tobacco), this protein is Oligouridylate-binding protein 1 (UBP1).